The primary structure comprises 656 residues: Methylenetetrahydrofolate reductase (NADPH) (656 aa).

The interval 1–46 (MVNEARGNDSLNPCLEGSASSSSESSKDSSRCSTPGLDPERHERLR) is disordered. 9 positions are modified to phosphoserine: S10, S18, S20, S21, S23, S25, S26, S29, and S30. T34 carries the post-translational modification Phosphothreonine. E63 functions as the Proton donor/acceptor in the catalytic mechanism. Residues 63–68 (EFFPPR) and 94–95 (TW) contribute to the NAD(+) site. T94 carries the phosphothreonine modification. 94 to 95 (TW) serves as a coordination point for FAD. Phosphoserine is present on S103. FAD is bound by residues H127, 157 to 159 (RGD), 174 to 175 (YA), Y197, 201 to 204 (HPEA), D210, and K217. D159 contacts substrate. Substrate contacts are provided by Q228, Y321, and R325. S394 bears the Phosphoserine mark. The residue at position 451 (T451) is a Phosphothreonine. S-adenosyl-L-methionine is bound by residues N456, 461 to 464 (AAET), 481 to 485 (TINSQ), T560, and T573.

Belongs to the methylenetetrahydrofolate reductase family. As to quaternary structure, homodimer. Requires FAD as cofactor. Phosphorylation of an N-terminal serine-rich phosphorylation region increases sensitivity to S-adenosylmethionine and inhibition.

The catalysed reaction is (6S)-5-methyl-5,6,7,8-tetrahydrofolate + NADP(+) = (6R)-5,10-methylene-5,6,7,8-tetrahydrofolate + NADPH + H(+). It functions in the pathway one-carbon metabolism; tetrahydrofolate interconversion. With respect to regulation, allosterically regulated by S-adenosylmethionine (SAM). Its function is as follows. Catalyzes the conversion of 5,10-methylenetetrahydrofolate to 5-methyltetrahydrofolate, a cosubstrate for homocysteine remethylation to methionine. Represents a key regulatory connection between the folate and methionine cycles. This chain is Methylenetetrahydrofolate reductase (NADPH) (MTHFR), found in Macaca fascicularis (Crab-eating macaque).